The chain runs to 174 residues: Adenylate kinase (174 aa).

The segment at 12 to 41 is NMP; the sequence is STGDMLRAAIKAGTPLGLEAKKIIDEGGLV. AMP is bound by residues Thr13, Arg18, 39 to 41, 67 to 70, and Gln74; these read GLV and GFPR. The LID stretch occupies residues 104–141; it reads GRRVHLASGRTYHIAYNPPKVEGKDDVTGEDLIQRDDD. Residues Arg105 and 114–115 each bind ATP; that span reads TY. Positions 138 and 149 each coordinate AMP.

It belongs to the adenylate kinase family. Monomer.

It localises to the cytoplasm. The enzyme catalyses AMP + ATP = 2 ADP. The protein operates within purine metabolism; AMP biosynthesis via salvage pathway; AMP from ADP: step 1/1. In terms of biological role, catalyzes the reversible transfer of the terminal phosphate group between ATP and AMP. Plays an important role in cellular energy homeostasis and in adenine nucleotide metabolism. This chain is Adenylate kinase, found in Neisseria animalis.